The sequence spans 138 residues: Membrane glycoprotein UL139 (138 aa).

An N-terminal signal peptide occupies residues 1 to 15; the sequence is MLWILVLFALAASAS. Positions 17–37 are disordered; the sequence is TTTGTSSNSSQSTSAGTTNTT. A helical transmembrane segment spans residues 64–84; it reads GWTLSGLLLIFTCCLCCFWLV. The segment covering 113 to 129 has biased composition (polar residues); the sequence is SDATLPMGTTGSYTPPQ. The tract at residues 113–138 is disordered; the sequence is SDATLPMGTTGSYTPPQDGSFPPPPR.

Its subcellular location is the host membrane. This is Membrane glycoprotein UL139 (UL139) from Homo sapiens (Human).